A 364-amino-acid polypeptide reads, in one-letter code: Heme A synthase (364 aa).

Transmembrane regions (helical) follow at residues Ala25 to Gly45, Phe111 to Gly131, Trp139 to Val159, Leu174 to Gly194, Ala212 to Leu232, Val270 to Val290, Ser305 to Leu325, and Val327 to Val347. His274 lines the heme pocket. His335 serves as a coordination point for heme.

This sequence belongs to the COX15/CtaA family. Type 2 subfamily. As to quaternary structure, interacts with CtaB. Heme b serves as cofactor.

Its subcellular location is the cell membrane. It catalyses the reaction Fe(II)-heme o + 2 A + H2O = Fe(II)-heme a + 2 AH2. It functions in the pathway porphyrin-containing compound metabolism; heme A biosynthesis; heme A from heme O: step 1/1. Functionally, catalyzes the conversion of heme O to heme A by two successive hydroxylations of the methyl group at C8. The first hydroxylation forms heme I, the second hydroxylation results in an unstable dihydroxymethyl group, which spontaneously dehydrates, resulting in the formyl group of heme A. This is Heme A synthase from Allorhizobium ampelinum (strain ATCC BAA-846 / DSM 112012 / S4) (Agrobacterium vitis (strain S4)).